A 1013-amino-acid polypeptide reads, in one-letter code: 2-oxoglutarate dehydrogenase, mitochondrial (1013 aa).

The N-terminal 39 residues, 1-39, are a transit peptide targeting the mitochondrion; the sequence is MFTLKQVINKSIQTSMKNGVMSSAVKRSFSTVGGINQPK. Arg-302, Asp-403, Asn-436, Ile-438, and Gln-664 together coordinate thiamine diphosphate. Mg(2+) is bound by residues Asp-403, Asn-436, and Ile-438.

This sequence belongs to the alpha-ketoglutarate dehydrogenase family. Homodimer. Component of the 2-oxoglutarate dehydrogenase complex. It depends on thiamine diphosphate as a cofactor. Mg(2+) is required as a cofactor.

It is found in the mitochondrion matrix. It catalyses the reaction N(6)-[(R)-lipoyl]-L-lysyl-[protein] + 2-oxoglutarate + H(+) = N(6)-[(R)-S(8)-succinyldihydrolipoyl]-L-lysyl-[protein] + CO2. Its function is as follows. The 2-oxoglutarate dehydrogenase complex catalyzes the overall conversion of 2-oxoglutarate to succinyl-CoA and CO(2). It contains multiple copies of three enzymatic components: 2-oxoglutarate dehydrogenase (E1), dihydrolipoamide succinyltransferase (E2) and lipoamide dehydrogenase (E3). The chain is 2-oxoglutarate dehydrogenase, mitochondrial (ogdh) from Dictyostelium discoideum (Social amoeba).